Reading from the N-terminus, the 295-residue chain is Putative enoyl reductase C646.07c (295 aa).

The Cytoplasmic segment spans residues 1 to 84 (MSITLSSRGR…KDLGPQIGWR (84 aa)). A helical membrane pass occupies residues 85–105 (TVFMIEYLGPLVIHLFFILNY). Residues 106–157 (KWIYRKDYNLCLNQKIAFVLVMLHFMKREYESIFVHRFSLATMPLRNIFKNC) lie on the Lumenal side of the membrane. Residues 158 to 178 (AHYHLLSGLFLAYFIYGPWHA) form a helical membrane-spanning segment. Over 179–186 (NDYIKPNH) the chain is Cytoplasmic. A helical transmembrane segment spans residues 187-207 (LLFLIVGWAFAVLSNFRTHII). Topologically, residues 208-223 (LRDLRPAGSKKRVIPT) are lumenal. The helical transmembrane segment at 224–246 (GYGFNLVSFPNYFFESLGWLFFA) threads the bilayer. Residues 247–250 (LLTK) lie on the Cytoplasmic side of the membrane. Residues 251 to 268 (SWASWIFLFVGSAQMFVW) form a helical membrane-spanning segment. At 269–295 (AKKKHARYLKEFPNYPRSRKIMIPFFL) the chain is on the lumenal side.

The protein belongs to the steroid 5-alpha reductase family.

It is found in the endoplasmic reticulum membrane. The catalysed reaction is a (2E)-enoyl-CoA + NADPH + H(+) = a 2,3-saturated acyl-CoA + NADP(+). This is Putative enoyl reductase C646.07c from Schizosaccharomyces pombe (strain 972 / ATCC 24843) (Fission yeast).